The following is a 647-amino-acid chain: DNA mismatch repair protein MutL (647 aa).

The protein belongs to the DNA mismatch repair MutL/HexB family.

In terms of biological role, this protein is involved in the repair of mismatches in DNA. It is required for dam-dependent methyl-directed DNA mismatch repair. May act as a 'molecular matchmaker', a protein that promotes the formation of a stable complex between two or more DNA-binding proteins in an ATP-dependent manner without itself being part of a final effector complex. This Bacillus thuringiensis (strain Al Hakam) protein is DNA mismatch repair protein MutL.